Here is a 232-residue protein sequence, read N- to C-terminus: 5'-methylthioadenosine/S-adenosylhomocysteine nucleosidase (232 aa).

Glu-14 (proton acceptor) is an active-site residue. Residues Gly-80, Val-154, and 175–176 (ME) contribute to the substrate site. Residue Asp-199 is the Proton donor of the active site.

This sequence belongs to the PNP/UDP phosphorylase family. MtnN subfamily.

It catalyses the reaction S-adenosyl-L-homocysteine + H2O = S-(5-deoxy-D-ribos-5-yl)-L-homocysteine + adenine. The catalysed reaction is S-methyl-5'-thioadenosine + H2O = 5-(methylsulfanyl)-D-ribose + adenine. The enzyme catalyses 5'-deoxyadenosine + H2O = 5-deoxy-D-ribose + adenine. It participates in amino-acid biosynthesis; L-methionine biosynthesis via salvage pathway; S-methyl-5-thio-alpha-D-ribose 1-phosphate from S-methyl-5'-thioadenosine (hydrolase route): step 1/2. Catalyzes the irreversible cleavage of the glycosidic bond in both 5'-methylthioadenosine (MTA) and S-adenosylhomocysteine (SAH/AdoHcy) to adenine and the corresponding thioribose, 5'-methylthioribose and S-ribosylhomocysteine, respectively. Also cleaves 5'-deoxyadenosine, a toxic by-product of radical S-adenosylmethionine (SAM) enzymes, into 5-deoxyribose and adenine. The polypeptide is 5'-methylthioadenosine/S-adenosylhomocysteine nucleosidase (Haemophilus ducreyi (strain 35000HP / ATCC 700724)).